The chain runs to 425 residues: Monoacylglycerol lipase ABHD2 (425 aa).

Residues 1–9 are Cytoplasmic-facing; the sequence is MNAMLETPE. Residues 10–30 traverse the membrane as a helical; Signal-anchor for type II membrane protein segment; it reads LPAVFDGVKLAAVAAVLYVIV. Topologically, residues 31–425 are extracellular; sequence RCLNLKSPTA…DTEQMEAELE (395 aa). The AB hydrolase-1 domain occupies 128-382; it reads MVICPGIANH…HGGHLGFFEG (255 aa). Asn-136 carries an N-linked (GlcNAc...) asparagine glycan. The active-site Nucleophile is the Ser-207. Catalysis depends on charge relay system residues Asp-345 and His-376. A glycan (N-linked (GlcNAc...) asparagine) is linked at Asn-410.

Belongs to the AB hydrolase superfamily. AB hydrolase 4 family. In terms of tissue distribution, widely expressed with higher expression in testis. Expressed by vascular smooth muscle cells, non vascular smooth muscle cells and heart.

Its subcellular location is the cell membrane. It is found in the cytoplasmic vesicle. It localises to the secretory vesicle. The protein resides in the acrosome membrane. The catalysed reaction is Hydrolyzes glycerol monoesters of long-chain fatty acids.. It catalyses the reaction an acetyl ester + H2O = an aliphatic alcohol + acetate + H(+). It carries out the reaction a triacylglycerol + H2O = a diacylglycerol + a fatty acid + H(+). The enzyme catalyses 2-(5Z,8Z,11Z,14Z-eicosatetraenoyl)-glycerol + H2O = glycerol + (5Z,8Z,11Z,14Z)-eicosatetraenoate + H(+). The catalysed reaction is a butanoate ester + H2O = an aliphatic alcohol + butanoate + H(+). It catalyses the reaction hexadecanoate ester + H2O = an aliphatic alcohol + hexadecanoate + H(+). With respect to regulation, acylglycerol lipase activity is activated upon binding to progesterone. In terms of biological role, progesterone-dependent acylglycerol lipase that catalyzes hydrolysis of endocannabinoid arachidonoylglycerol (AG) from cell membrane. Acts as a progesterone receptor: progesterone-binding activates the acylglycerol lipase activity, mediating degradation of 1-arachidonoylglycerol (1AG) and 2-arachidonoylglycerol (2AG) to glycerol and arachidonic acid (AA). Also displays an ester hydrolase activity against acetyl ester, butanoate ester and hexadecanoate ester. Plays a key role in sperm capacitation in response to progesterone by mediating degradation of 2AG, an inhibitor of the sperm calcium channel CatSper, leading to calcium influx via CatSper and sperm activation. Involved in acrosomal reaction. May also play a role in smooth muscle cells migration. The sequence is that of Monoacylglycerol lipase ABHD2 (Abhd2) from Mus musculus (Mouse).